Consider the following 149-residue polypeptide: Large ribosomal subunit protein eL19 (149 aa).

The tract at residues 45-130 (VDEGAIQAKD…RDLYDKAGGG (86 aa)) is disordered. Positions 58–85 (NSRGRARERQKKRAYGHQKGAGSRKGKA) are enriched in basic residues. Basic and acidic residues predominate over residues 90 to 113 (NSKEDWESRIRAQRTKLRELRDEG).

Belongs to the eukaryotic ribosomal protein eL19 family. In terms of assembly, part of the 50S ribosomal subunit.

Functionally, binds to the 23S rRNA. Located at the polypeptide exit tunnel on the outside of the subunit. In Haloarcula marismortui (strain ATCC 43049 / DSM 3752 / JCM 8966 / VKM B-1809) (Halobacterium marismortui), this protein is Large ribosomal subunit protein eL19.